A 22-amino-acid polypeptide reads, in one-letter code: Phospholipase A2 (22 aa).

This sequence belongs to the phospholipase A2 family. Requires Ca(2+) as cofactor.

The protein resides in the secreted. The enzyme catalyses a 1,2-diacyl-sn-glycero-3-phosphocholine + H2O = a 1-acyl-sn-glycero-3-phosphocholine + a fatty acid + H(+). Its function is as follows. PA2 catalyzes the calcium-dependent hydrolysis of the 2-acyl groups in 3-sn-phosphoglycerides. In Struthio camelus (Common ostrich), this protein is Phospholipase A2.